The sequence spans 303 residues: Elongation factor Ts (303 aa).

An involved in Mg(2+) ion dislocation from EF-Tu region spans residues 82-85; the sequence is TDFV.

It belongs to the EF-Ts family.

Its subcellular location is the cytoplasm. Its function is as follows. Associates with the EF-Tu.GDP complex and induces the exchange of GDP to GTP. It remains bound to the aminoacyl-tRNA.EF-Tu.GTP complex up to the GTP hydrolysis stage on the ribosome. The chain is Elongation factor Ts from Clostridioides difficile (strain 630) (Peptoclostridium difficile).